A 176-amino-acid chain; its full sequence is UPF0098 protein Rv2140c (176 aa).

Thr2 carries the post-translational modification N-acetylthreonine.

The protein belongs to the UPF0098 family.

This chain is UPF0098 protein Rv2140c, found in Mycobacterium tuberculosis (strain ATCC 25618 / H37Rv).